A 1145-amino-acid polypeptide reads, in one-letter code: Trafficking protein particle complex subunit 10 (1145 aa).

The protein belongs to the TMEM1 family. Part of the multisubunit TRAPP (transport protein particle) complex. Interacts with Shal (via C-terminal dendritic targeting motif). As to expression, co-expressed with Shal in the nervous system.

The protein resides in the golgi apparatus. It localises to the cis-Golgi network. Its subcellular location is the cell projection. The protein localises to the dendrite. It is found in the perikaryon. In terms of biological role, may play a role in vesicular transport from endoplasmic reticulum to Golgi. Has a role in one of the several mechanisms underlying dendritic localization of Shal channels. This is Trafficking protein particle complex subunit 10 (SIDL) from Drosophila melanogaster (Fruit fly).